The chain runs to 852 residues: Probable inorganic carbon transporter subunit DabA (852 aa).

The Zn(2+) site is built by cysteine 370, aspartate 372, histidine 554, and cysteine 569.

This sequence belongs to the inorganic carbon transporter (TC 9.A.2) DabA family. As to quaternary structure, forms a complex with DabB. Zn(2+) is required as a cofactor.

The protein resides in the cell inner membrane. Part of an energy-coupled inorganic carbon pump. The protein is Probable inorganic carbon transporter subunit DabA of Novosphingobium aromaticivorans (strain ATCC 700278 / DSM 12444 / CCUG 56034 / CIP 105152 / NBRC 16084 / F199).